A 634-amino-acid polypeptide reads, in one-letter code: DNA-directed RNA polymerase subunit gamma (634 aa).

Cysteine 74, cysteine 76, cysteine 89, and cysteine 92 together coordinate Zn(2+). Mg(2+)-binding residues include aspartate 471, aspartate 473, and aspartate 475.

The protein belongs to the RNA polymerase beta' chain family. RpoC1 subfamily. As to quaternary structure, in cyanobacteria the RNAP catalytic core is composed of 2 alpha, 1 beta, 1 beta', 1 gamma and 1 omega subunit. When a sigma factor is associated with the core the holoenzyme is formed, which can initiate transcription. The cofactor is Mg(2+). Zn(2+) is required as a cofactor.

The enzyme catalyses RNA(n) + a ribonucleoside 5'-triphosphate = RNA(n+1) + diphosphate. Its function is as follows. DNA-dependent RNA polymerase catalyzes the transcription of DNA into RNA using the four ribonucleoside triphosphates as substrates. The chain is DNA-directed RNA polymerase subunit gamma from Prochlorococcus marinus (strain AS9601).